Here is a 458-residue protein sequence, read N- to C-terminus: NADH-quinone oxidoreductase subunit N (458 aa).

Helical transmembrane passes span 2–22 (LLLL…FFAV), 30–50 (IISN…FKYS), 62–82 (GINI…SMII), 94–114 (LKFE…VAIS), 118–138 (FLLL…LAGF), 153–173 (FILG…IYGF), 194–214 (LGLI…LSSV), 235–255 (FNAA…KLII), 261–281 (INYN…AFGA), 290–310 (LMAY…LLHN), 318–338 (LLYM…LIIL), 361–381 (IAAV…LTGF), 397–417 (FALA…YLKV), and 438–458 (LLLI…IISF).

This sequence belongs to the complex I subunit 2 family. As to quaternary structure, NDH-1 is composed of 14 different subunits. Subunits NuoA, H, J, K, L, M, N constitute the membrane sector of the complex.

Its subcellular location is the cell inner membrane. The enzyme catalyses a quinone + NADH + 5 H(+)(in) = a quinol + NAD(+) + 4 H(+)(out). Its function is as follows. NDH-1 shuttles electrons from NADH, via FMN and iron-sulfur (Fe-S) centers, to quinones in the respiratory chain. The immediate electron acceptor for the enzyme in this species is believed to be ubiquinone. Couples the redox reaction to proton translocation (for every two electrons transferred, four hydrogen ions are translocated across the cytoplasmic membrane), and thus conserves the redox energy in a proton gradient. This is NADH-quinone oxidoreductase subunit N from Rickettsia conorii (strain ATCC VR-613 / Malish 7).